A 1085-amino-acid chain; its full sequence is Cell wall protein IFF6 (1085 aa).

The signal sequence occupies residues 1 to 19; sequence MLLKQIFLPFFVLFNAINA. The interval 339-1060 is disordered; that stretch reads PSPGTDESSS…SSNSATIPEQ (722 aa). Residues 342–528 show a composition bias toward low complexity; the sequence is GTDESSSLSS…QSSSGTGQSS (187 aa). Over residues 529 to 538 the composition is skewed to acidic residues; that stretch reads TEDEPIDSTE. Positions 539-828 are enriched in low complexity; that stretch reads SDTSSATDSS…TVTNTATNTG (290 aa). Residues N659, N782, N854, N860, N864, N874, N882, N886, N890, N896, N900, N910, N924, N932, N938, N952, N960, N964, N968, N976, N980, N992, N996, N1008, and N1016 are each glycosylated (N-linked (GlcNAc...) asparagine). A compositionally biased stretch (gly residues) spans 847–1010; that stretch reads NNGGGSNNGS…GSGSGSGNGS (164 aa). The span at 1018–1028 shows a compositional bias: gly residues; that stretch reads SGSGSGSGNGQ. A compositionally biased stretch (low complexity) spans 1031–1052; the sequence is GIITSSIGQPGSSTSTQGPSSS. Residue N1062 is the site of GPI-anchor amidated asparagine attachment. A propeptide spans 1063 to 1085 (removed in mature form); that stretch reads SGNHIKFTLFNGLLIGLVPIVFM.

It belongs to the HYR1/IFF family. In terms of processing, the GPI-anchor is attached to the protein in the endoplasmic reticulum and serves to target the protein to the cell surface. There, the glucosamine-inositol phospholipid moiety is cleaved off and the GPI-modified mannoprotein is covalently attached via its lipidless GPI glycan remnant to the 1,6-beta-glucan of the outer cell wall layer.

It is found in the secreted. Its subcellular location is the cell wall. The protein resides in the membrane. In terms of biological role, GPI-anchored cell wall protein involved in cell wall organization, hyphal growth, as well as in host-fungal interaction and virulence. This Candida albicans (strain SC5314 / ATCC MYA-2876) (Yeast) protein is Cell wall protein IFF6 (IFF6).